The primary structure comprises 241 residues: Ribonuclease PH (241 aa).

Phosphate-binding positions include Arg89 and 127–129; that span reads GTR.

This sequence belongs to the RNase PH family. As to quaternary structure, homohexameric ring arranged as a trimer of dimers.

It catalyses the reaction tRNA(n+1) + phosphate = tRNA(n) + a ribonucleoside 5'-diphosphate. Functionally, phosphorolytic 3'-5' exoribonuclease that plays an important role in tRNA 3'-end maturation. Removes nucleotide residues following the 3'-CCA terminus of tRNAs; can also add nucleotides to the ends of RNA molecules by using nucleoside diphosphates as substrates, but this may not be physiologically important. Probably plays a role in initiation of 16S rRNA degradation (leading to ribosome degradation) during starvation. The chain is Ribonuclease PH from Xylella fastidiosa (strain 9a5c).